The chain runs to 256 residues: Pimeloyl-[acyl-carrier protein] methyl ester esterase (256 aa).

The AB hydrolase-1 domain occupies 15-242 (HLVLLHGWGL…AAHAPFISHP (228 aa)). Residues Trp-22, 82 to 83 (SL), and 143 to 147 (FLALQ) contribute to the substrate site. Ser-82 (nucleophile) is an active-site residue. Catalysis depends on residues Asp-207 and His-235. His-235 contributes to the substrate binding site.

The protein belongs to the AB hydrolase superfamily. Carboxylesterase BioH family. In terms of assembly, monomer.

The protein resides in the cytoplasm. The catalysed reaction is 6-carboxyhexanoyl-[ACP] methyl ester + H2O = 6-carboxyhexanoyl-[ACP] + methanol + H(+). It participates in cofactor biosynthesis; biotin biosynthesis. Its function is as follows. The physiological role of BioH is to remove the methyl group introduced by BioC when the pimeloyl moiety is complete. It allows to synthesize pimeloyl-ACP via the fatty acid synthetic pathway through the hydrolysis of the ester bonds of pimeloyl-ACP esters. The polypeptide is Pimeloyl-[acyl-carrier protein] methyl ester esterase (Escherichia coli (strain K12 / MC4100 / BW2952)).